A 342-amino-acid chain; its full sequence is S-adenosylmethionine:tRNA ribosyltransferase-isomerase (342 aa).

This sequence belongs to the QueA family. As to quaternary structure, monomer.

It localises to the cytoplasm. The enzyme catalyses 7-aminomethyl-7-carbaguanosine(34) in tRNA + S-adenosyl-L-methionine = epoxyqueuosine(34) in tRNA + adenine + L-methionine + 2 H(+). The protein operates within tRNA modification; tRNA-queuosine biosynthesis. Functionally, transfers and isomerizes the ribose moiety from AdoMet to the 7-aminomethyl group of 7-deazaguanine (preQ1-tRNA) to give epoxyqueuosine (oQ-tRNA). The sequence is that of S-adenosylmethionine:tRNA ribosyltransferase-isomerase from Streptococcus pyogenes serotype M6 (strain ATCC BAA-946 / MGAS10394).